Consider the following 196-residue polypeptide: Purpurin (196 aa).

An N-terminal signal peptide occupies residues 1–21; the sequence is MKYAQYVFLASIFSAVEYSLA. Cystine bridges form between Cys24/Cys182, Cys90/Cys196, and Cys142/Cys151.

The protein belongs to the calycin superfamily. Lipocalin family.

Its subcellular location is the secreted. The protein localises to the extracellular space. It is found in the extracellular matrix. It localises to the interphotoreceptor matrix. Functionally, may be involved in the transport of retinol between the photoreceptors and the pigmented epithelium. This Gallus gallus (Chicken) protein is Purpurin.